Consider the following 1582-residue polypeptide: Alpha-2-macroglobulin (1582 aa).

Positions 1–15 (MICLAALAVAVPARA) are cleaved as a signal peptide. Residues 1080 to 1083 (CAEQ) constitute a cross-link (isoglutamyl cysteine thioester (Cys-Gln)).

The protein belongs to the protease inhibitor I39 (alpha-2-macroglobulin) family. Bacterial alpha-2-macroglobulin subfamily.

Functionally, protects the bacterial cell from host peptidases. This Ralstonia nicotianae (strain ATCC BAA-1114 / GMI1000) (Ralstonia solanacearum) protein is Alpha-2-macroglobulin.